Reading from the N-terminus, the 528-residue chain is Probable rhamnogalacturonate lyase A (528 aa).

An N-terminal signal peptide occupies residues 1–20; sequence MFFQTGLLLSLSLWTKVAYA. 2 disulfide bridges follow: Cys-50–Cys-93 and Cys-184–Cys-193. Asn-56 carries an N-linked (GlcNAc...) asparagine glycan. N-linked (GlcNAc...) asparagine glycosylation occurs at Asn-351.

This sequence belongs to the polysaccharide lyase 4 family.

The protein localises to the secreted. The enzyme catalyses Endotype eliminative cleavage of L-alpha-rhamnopyranosyl-(1-&gt;4)-alpha-D-galactopyranosyluronic acid bonds of rhamnogalacturonan I domains in ramified hairy regions of pectin leaving L-rhamnopyranose at the reducing end and 4-deoxy-4,5-unsaturated D-galactopyranosyluronic acid at the non-reducing end.. Functionally, pectinolytic enzymes consist of four classes of enzymes: pectin lyase, polygalacturonase, pectin methylesterase and rhamnogalacturonase. Degrades the rhamnogalacturonan I (RG-I) backbone of pectin. Active against linseed rhamnogalacturonan. This Aspergillus clavatus (strain ATCC 1007 / CBS 513.65 / DSM 816 / NCTC 3887 / NRRL 1 / QM 1276 / 107) protein is Probable rhamnogalacturonate lyase A (rglA).